Here is a 139-residue protein sequence, read N- to C-terminus: Angiogenin (139 aa).

A signal peptide spans 1–21; sequence MAMSSLWWTAILLLALTVSMC. The active-site Proton acceptor is the His34. 3 disulfides stabilise this stretch: Cys49–Cys102, Cys64–Cys111, and Cys82–Cys126. Cys102 and Val122 together coordinate tRNA. The active-site Proton donor is the His133.

Belongs to the pancreatic ribonuclease family. Homodimer. Interacts with RNH1; inhibiting ANG ribonuclease activity.

The protein localises to the secreted. Its subcellular location is the nucleus. The protein resides in the nucleolus. It localises to the cytoplasm. It is found in the stress granule. In terms of biological role, secreted ribonuclease that can either promote or restrict cell proliferation of target cells, depending on the context. Endocytosed in target cells via its receptor PLXNB2 and translocates to the cytoplasm or nucleus. Under stress conditions, localizes to the cytoplasm and promotes the assembly of stress granules (SGs): specifically cleaves a subset of tRNAs within anticodon loops to produce tRNA-derived stress-induced fragments (tiRNAs), resulting in translation repression and inhibition of cell proliferation. tiRNas also prevent formation of apoptosome, thereby promoting cell survival. Preferentially cleaves RNAs between a pyrimidine and an adenosine residue, suggesting that it cleaves the anticodon loop of tRNA(Ala) (32-UUAGCAU-38) after positions 33 and 36. Cleaves a subset of tRNAs, including tRNA(Ala), tRNA(Glu), tRNA(Gly), tRNA(Lys), tRNA(Val), tRNA(His), tRNA(Asp) and tRNA(Sec). Under growth conditions and in differentiated cells, translocates to the nucleus and stimulates ribosomal RNA (rRNA) transcription, including that containing the initiation site sequences of 45S rRNA, thereby promoting cell growth and proliferation. Angiogenin induces vascularization of normal and malignant tissues via its ability to promote rRNA transcription. This is Angiogenin (ANG) from Gallus gallus (Chicken).